The primary structure comprises 467 residues: Syntaxin-5 (467 aa).

2 disordered regions span residues 1–53 and 58–77; these read MQTR…QSLV and GHEAAIHIGDNYQSGDSIST. Residues 1 to 445 lie on the Cytoplasmic side of the membrane; it reads MQTRRRLHQT…KYFQSVSKNR (445 aa). Low complexity predominate over residues 10 to 22; that stretch reads TDQQDYSSSSTYT. A compositionally biased stretch (gly residues) spans 29–45; that stretch reads GGAGAGSVGTGTAGGSV. The span at 68–77 shows a compositional bias: polar residues; it reads NYQSGDSIST. Positions 245–269 form a coiled coil; sequence IKGDLNALNQQIARLQDISKDQRRH. Residues 310 to 335 form a disordered region; it reads QQKTRRDQFSQGPGPLAAHTVSPSTA. The t-SNARE coiled-coil homology domain maps to 375-437; the sequence is DNYVQQRAET…EAAHGEILKY (63 aa). Residues 446–466 traverse the membrane as a helical; Anchor for type IV membrane protein segment; the sequence is WLMIKIFGVLIFFFLFFVVFM. A topological domain (vesicular) is located at residue Ser467.

The protein belongs to the syntaxin family. As to quaternary structure, homodimer.

The protein localises to the golgi apparatus. It is found in the cis-Golgi network membrane. Mediates endoplasmic reticulum to Golgi transport. This chain is Syntaxin-5, found in Drosophila melanogaster (Fruit fly).